The primary structure comprises 130 residues: Anti-adapter protein IraD (130 aa).

Belongs to the GpW/Gp25 family. IraD subfamily. As to quaternary structure, interacts with RssB.

It localises to the cytoplasm. Its function is as follows. Inhibits RpoS proteolysis by regulating RssB activity, thereby increasing the stability of the sigma stress factor RpoS during oxidative stress. Its effect on RpoS stability is due to its interaction with RssB, which probably blocks the interaction of RssB with RpoS, and the consequent delivery of the RssB-RpoS complex to the ClpXP protein degradation pathway. This is Anti-adapter protein IraD from Escherichia coli O157:H7.